Reading from the N-terminus, the 344-residue chain is DnaJ homolog subfamily C member 25 (344 aa).

Residues 5 to 25 traverse the membrane as a helical segment; it reads WVLLVALSVLFLSGRAGALTE. Residues 33–108 enclose the J domain; sequence VCYDVLGVSR…ETRKDYDYML (76 aa). A run of 2 helical transmembrane segments spans residues 134-154 and 228-248; these read IVIL…WWSS and ILLF…SWYV.

The protein belongs to the DNAJC25 family.

It localises to the membrane. The polypeptide is DnaJ homolog subfamily C member 25 (dnajc25) (Xenopus laevis (African clawed frog)).